Here is a 967-residue protein sequence, read N- to C-terminus: Leucine--tRNA ligase (967 aa).

The 'HIGH' region signature appears at 43 to 53 (PYLSGHLHVGH). Residues 650 to 654 (KMSKS) carry the 'KMSKS' region motif. Lys-653 is an ATP binding site.

The protein belongs to the class-I aminoacyl-tRNA synthetase family.

It localises to the cytoplasm. The enzyme catalyses tRNA(Leu) + L-leucine + ATP = L-leucyl-tRNA(Leu) + AMP + diphosphate. This is Leucine--tRNA ligase from Pyrococcus abyssi (strain GE5 / Orsay).